The following is a 382-amino-acid chain: Mannitol-1-phosphate 5-dehydrogenase (382 aa).

4–15 is a binding site for NAD(+); the sequence is AVHFGAGNIGRG.

Belongs to the mannitol dehydrogenase family.

It catalyses the reaction D-mannitol 1-phosphate + NAD(+) = beta-D-fructose 6-phosphate + NADH + H(+). This chain is Mannitol-1-phosphate 5-dehydrogenase, found in Vibrio vulnificus (strain CMCP6).